The sequence spans 126 residues: Probable small nuclear ribonucleoprotein Sm D1 (126 aa).

The Sm domain maps to 2–74 (KLVRFLMKLS…IRYIILPDPL (73 aa)). The disordered stretch occupies residues 86–126 (RKKARAARAGASRGRGRGGMRGGRGGRGRGRGGPRGGGPRR). The span at 99–126 (GRGRGGMRGGRGGRGRGRGGPRGGGPRR) shows a compositional bias: basic residues.

It belongs to the snRNP core protein family.

Its subcellular location is the nucleus. The protein resides in the cytoplasm. The protein localises to the cytosol. In terms of biological role, plays a role in pre-mRNA splicing as a core component of the spliceosomal U1, U2, U4 and U5 small nuclear ribonucleoproteins (snRNPs), the building blocks of the spliceosome. The chain is Probable small nuclear ribonucleoprotein Sm D1 (snr-3) from Caenorhabditis elegans.